The following is a 1090-amino-acid chain: Pullulanase (1090 aa).

An N-terminal signal peptide occupies residues 1 to 19; it reads MLRYTRNALVLGSLVLLSG. Cysteine 20 carries N-palmitoyl cysteine lipidation. The S-diacylglycerol cysteine moiety is linked to residue cysteine 20. Aspartate 684 (nucleophile) is an active-site residue. The Proton donor role is filled by glutamate 713.

The protein belongs to the glycosyl hydrolase 13 family. Homotrimer.

The protein resides in the cell membrane. It carries out the reaction Hydrolysis of (1-&gt;6)-alpha-D-glucosidic linkages in pullulan, amylopectin and glycogen, and in the alpha- and beta-limit dextrins of amylopectin and glycogen.. This Klebsiella pneumoniae protein is Pullulanase (pulA).